Here is a 301-residue protein sequence, read N- to C-terminus: Probable alpha-L-glutamate ligase (301 aa).

The 184-residue stretch at 104 to 287 folds into the ATP-grasp domain; sequence LQLLARKGIG…VAGQLIDYIE (184 aa). ATP contacts are provided by residues Lys141, 178–179, Asp187, and 211–213; these read EF and RSN. Mg(2+) contacts are provided by Asp248, Glu260, and Asn262. Mn(2+)-binding residues include Asp248, Glu260, and Asn262.

It belongs to the RimK family. The cofactor is Mg(2+). It depends on Mn(2+) as a cofactor.

The chain is Probable alpha-L-glutamate ligase from Maridesulfovibrio salexigens (strain ATCC 14822 / DSM 2638 / NCIMB 8403 / VKM B-1763) (Desulfovibrio salexigens).